We begin with the raw amino-acid sequence, 436 residues long: 3-ketoacyl-CoA thiolase (436 aa).

Cys99 (acyl-thioester intermediate) is an active-site residue. Active-site proton acceptor residues include His392 and Cys422.

It belongs to the thiolase-like superfamily. Thiolase family. As to quaternary structure, heterotetramer of two alpha chains (FadJ) and two beta chains (FadI).

The protein resides in the cytoplasm. The enzyme catalyses an acyl-CoA + acetyl-CoA = a 3-oxoacyl-CoA + CoA. It functions in the pathway lipid metabolism; fatty acid beta-oxidation. Its function is as follows. Catalyzes the final step of fatty acid oxidation in which acetyl-CoA is released and the CoA ester of a fatty acid two carbons shorter is formed. This chain is 3-ketoacyl-CoA thiolase, found in Escherichia coli (strain SMS-3-5 / SECEC).